The primary structure comprises 458 residues: Probable threonine--tRNA ligase, cytoplasmic (458 aa).

Residues Asp41–Gly104 enclose the TGS domain.

This sequence belongs to the class-II aminoacyl-tRNA synthetase family.

The protein localises to the cytoplasm. The catalysed reaction is tRNA(Thr) + L-threonine + ATP = L-threonyl-tRNA(Thr) + AMP + diphosphate + H(+). The protein is Probable threonine--tRNA ligase, cytoplasmic of Arabidopsis thaliana (Mouse-ear cress).